We begin with the raw amino-acid sequence, 151 residues long: Caveolin-3 (151 aa).

Topologically, residues 1 to 83 are cytoplasmic; it reads MMAEEHTDLE…RLLSTLLGVP (83 aa). Residue K38 forms a Glycyl lysine isopeptide (Lys-Gly) (interchain with G-Cter in SUMO3) linkage. Positions 64–114 are required for interaction with DAG1; sequence TFTVSKYWCYRLLSTLLGVPLALLWGFLFACISFCHIWAVVPCIKSYLIEI. Positions 84–104 form an intramembrane region, helical; the sequence is LALLWGFLFACISFCHIWAVV. Residues 105–151 lie on the Cytoplasmic side of the membrane; it reads PCIKSYLIEIQCISHIYSLCIRTFCNPLFAALGQVCSNIKVMLRKEV.

This sequence belongs to the caveolin family. As to quaternary structure, homooligomer. Interacts with DYSF. Interacts with DLG1 and KCNA5; forms a ternary complex. Interacts with DAG1 (via its C-terminal); the interaction prevents binding of DAG1 with DMD. Interacts with TRIM72. Interacts with MUSK; may regulate MUSK signaling. Interacts with POPDC1. Interacts with CAVIN1, CAVIN2 and CAVIN4. In terms of processing, sumoylation with SUMO3 by PIAS4 may reduce agonist-induced internalization and desensitization of adrenergic receptor ABRD2.

Its subcellular location is the golgi apparatus membrane. The protein localises to the cell membrane. It is found in the membrane. The protein resides in the caveola. It localises to the sarcolemma. Its function is as follows. May act as a scaffolding protein within caveolar membranes. Interacts directly with G-protein alpha subunits and can functionally regulate their activity. May also regulate voltage-gated potassium channels. Plays a role in the sarcolemma repair mechanism of both skeletal muscle and cardiomyocytes that permits rapid resealing of membranes disrupted by mechanical stress. Mediates the recruitment of CAVIN2 and CAVIN3 proteins to the caveolae. The protein is Caveolin-3 (CAV3) of Bos taurus (Bovine).